Consider the following 446-residue polypeptide: MTSLEMALEYIKINNVKFLRFQFVDIHGEPKNIAYPVKLGTADGEEELMGVLENGLFFDGSSIEGFVEIEDSDMVLKPDLSTLSVLPWRPSEKSVARIICDVYRKNGKPFEGDPRGCLKRVLAEFKEEFKGEYFVGPEPEFFILKNENGKWVPGDDAGYFELEPLDEGNDLRRNIVFALENLGFHVEASHHEVAPGQHEVDFKYDNAVKTADSVITFKTTIKTLAKQSGVLATFMPKPFFGMNGSGMHCNQSIWLDGKPSFYDENNAHQLSDICLSYIGGILEHTKALVSVTNPTVNSYKRLVPGYEAPVNIAWANSNRTSIIRVPAARGKGTRVEFRAPDPACNPYLAFTVMLAAGLDGVRRKLIAPEPVEKNIFAMSEAEKREANIDSVPSNLYDAIEELRQDKVLKKALGDHIFNKFIEIKTKEYDAYRTAVTDWEFNKYVRI.

Residues 14-107 (NNVKFLRFQF…IICDVYRKNG (94 aa)) enclose the GS beta-grasp domain. Residues 114–446 (PRGCLKRVLA…DWEFNKYVRI (333 aa)) enclose the GS catalytic domain. Mg(2+) is bound by residues glutamate 138 and glutamate 140. Glutamate 187 serves as a coordination point for ATP. Glutamate 192 and glutamate 199 together coordinate Mg(2+). L-glutamate contacts are provided by residues 243-244 (NG) and glycine 244. Histidine 248 contacts Mg(2+). Position 252 (serine 252) interacts with ATP. The L-glutamate site is built by arginine 301, glutamate 307, and arginine 319. Arginine 319, arginine 324, and lysine 331 together coordinate ATP. Residue glutamate 336 coordinates Mg(2+). Arginine 338 contributes to the L-glutamate binding site.

This sequence belongs to the glutamine synthetase family. As to quaternary structure, oligomer of 12 subunits arranged in the form of two hexagons. Mg(2+) serves as cofactor.

The protein localises to the cytoplasm. It catalyses the reaction L-glutamate + NH4(+) + ATP = L-glutamine + ADP + phosphate + H(+). Probably involved in nitrogen metabolism via ammonium assimilation. Catalyzes the ATP-dependent biosynthesis of glutamine from glutamate and ammonia. The sequence is that of Glutamine synthetase from Methanococcus voltae.